A 645-amino-acid polypeptide reads, in one-letter code: 1-deoxy-D-xylulose-5-phosphate synthase (645 aa).

Thiamine diphosphate contacts are provided by residues histidine 83 and 124 to 126 (GHS). Aspartate 155 provides a ligand contact to Mg(2+). Residues 156–157 (GS), asparagine 184, tyrosine 295, and glutamate 376 each bind thiamine diphosphate. Residue asparagine 184 participates in Mg(2+) binding.

This sequence belongs to the transketolase family. DXPS subfamily. In terms of assembly, homodimer. Mg(2+) is required as a cofactor. The cofactor is thiamine diphosphate.

The catalysed reaction is D-glyceraldehyde 3-phosphate + pyruvate + H(+) = 1-deoxy-D-xylulose 5-phosphate + CO2. It participates in metabolic intermediate biosynthesis; 1-deoxy-D-xylulose 5-phosphate biosynthesis; 1-deoxy-D-xylulose 5-phosphate from D-glyceraldehyde 3-phosphate and pyruvate: step 1/1. Catalyzes the acyloin condensation reaction between C atoms 2 and 3 of pyruvate and glyceraldehyde 3-phosphate to yield 1-deoxy-D-xylulose-5-phosphate (DXP). The protein is 1-deoxy-D-xylulose-5-phosphate synthase of Desulfotalea psychrophila (strain LSv54 / DSM 12343).